The chain runs to 125 residues: RxLR effector protein Avh6 (125 aa).

Residues 1–25 form the signal peptide; the sequence is MRLSSTTFVVLAAVLLASGTAVSKA. The short motif at 48-70 is the RxLR-dEER element; that stretch reads RFLRSHHTEDGEAKLSNYDNEER.

Belongs to the RxLR effector family.

Its subcellular location is the secreted. The protein localises to the host cell. Its function is as follows. Effector that suppresses plant defense responses during the early stages of pathogen infection. Suppresses cell death induced by effectors and PAMPs in plant hosts. Triggers a hypersensitive response (HR) in the presence of Rps1d. Suppresses BAX-induced cell death and enhan,ced P.capsici infection in Nicotiana benthamiana. Also suppresses effector-triggered immunity induction by associating with Avr1b and Rps1b, suggesting a role in suppressing plant immunity. The sequence is that of RxLR effector protein Avh6 from Phytophthora sojae (strain P6497) (Soybean stem and root rot agent).